The sequence spans 145 residues: 3-hydroxyacyl-[acyl-carrier-protein] dehydratase FabZ (145 aa).

H49 is a catalytic residue.

It belongs to the thioester dehydratase family. FabZ subfamily.

It is found in the cytoplasm. It catalyses the reaction a (3R)-hydroxyacyl-[ACP] = a (2E)-enoyl-[ACP] + H2O. Involved in unsaturated fatty acids biosynthesis. Catalyzes the dehydration of short chain beta-hydroxyacyl-ACPs and long chain saturated and unsaturated beta-hydroxyacyl-ACPs. This is 3-hydroxyacyl-[acyl-carrier-protein] dehydratase FabZ from Anaplasma phagocytophilum (strain HZ).